Reading from the N-terminus, the 72-residue chain is DNA-directed RNA polymerase subunit epsilon (72 aa).

It belongs to the RNA polymerase subunit epsilon family. RNAP is composed of a core of 2 alpha, a beta and a beta' subunit. The core is associated with a delta subunit, and at least one of epsilon or omega. When a sigma factor is associated with the core the holoenzyme is formed, which can initiate transcription.

It carries out the reaction RNA(n) + a ribonucleoside 5'-triphosphate = RNA(n+1) + diphosphate. Its function is as follows. A non-essential component of RNA polymerase (RNAP). The sequence is that of DNA-directed RNA polymerase subunit epsilon from Staphylococcus haemolyticus (strain JCSC1435).